Consider the following 136-residue polypeptide: Calmodulin-A (136 aa).

EF-hand domains lie at 1 to 36 (EQIA…LGQN), 37 to 72 (PTEA…KMKD), 74 to 109 (DSEE…LGEK), and 110 to 136 (LTDE…EEFV). Positions 14, 16, 18, 20, 25, 50, 52, 54, 56, 61, 87, 89, 91, 93, and 98 each coordinate Ca(2+). K109 bears the N6,N6,N6-trimethyllysine mark. The Ca(2+) site is built by D123, D125, D127, Q129, and E134.

This sequence belongs to the calmodulin family.

Its function is as follows. Calmodulin acts as part of a calcium signal transduction pathway by mediating the control of a large number of enzymes, ion channels, aquaporins and other proteins through calcium-binding. Calcium-binding is required for the activation of calmodulin. Among the enzymes to be stimulated by the calmodulin-calcium complex are a number of protein kinases, such as myosin light-chain kinases and calmodulin-dependent protein kinase type II (CaMK2), and phosphatases. The chain is Calmodulin-A (calm1) from Oryzias latipes (Japanese rice fish).